The sequence spans 123 residues: Mediator of RNA polymerase II transcription subunit 9 (123 aa).

Positions 95 to 123 (WQLHIQEKKIELEKKTKHLQRLRESIQKQ) form a coiled coil.

Belongs to the Mediator complex subunit 9 family. Component of the Mediator complex.

The protein resides in the nucleus. In terms of biological role, component of the Mediator complex, a coactivator involved in the regulated transcription of nearly all RNA polymerase II-dependent genes. Mediator functions as a bridge to convey information from gene-specific regulatory proteins to the basal RNA polymerase II transcription machinery. Mediator is recruited to promoters by direct interactions with regulatory proteins and serves as a scaffold for the assembly of a functional preinitiation complex with RNA polymerase II and the general transcription factors. The chain is Mediator of RNA polymerase II transcription subunit 9 (CSE2) from Kluyveromyces lactis (strain ATCC 8585 / CBS 2359 / DSM 70799 / NBRC 1267 / NRRL Y-1140 / WM37) (Yeast).